The sequence spans 361 residues: Aromatic amino acid aminotransferase (361 aa).

N6-(pyridoxal phosphate)lysine is present on K221.

The protein belongs to the class-II pyridoxal-phosphate-dependent aminotransferase family. Homodimer. Pyridoxal 5'-phosphate serves as cofactor.

The enzyme catalyses an aromatic L-alpha-amino acid + 2-oxoglutarate = an aromatic oxo-acid + L-glutamate. Its function is as follows. Aminotransferase that catalyzes the conversion of aromatic amino acids and 2-oxoglutarate into corresponding aromatic oxo acids and L-glutamate. This chain is Aromatic amino acid aminotransferase, found in Mycobacterium marinum (strain ATCC BAA-535 / M).